A 311-amino-acid polypeptide reads, in one-letter code: UDP-N-acetylenolpyruvoylglucosamine reductase (311 aa).

An FAD-binding PCMH-type domain is found at 29 to 191 (IGGKADIVLK…LSARLKLKPI (163 aa)). Arg172 is a catalytic residue. Ser223 (proton donor) is an active-site residue. Glu299 is a catalytic residue.

It belongs to the MurB family. FAD is required as a cofactor.

The protein resides in the cytoplasm. The enzyme catalyses UDP-N-acetyl-alpha-D-muramate + NADP(+) = UDP-N-acetyl-3-O-(1-carboxyvinyl)-alpha-D-glucosamine + NADPH + H(+). Its pathway is cell wall biogenesis; peptidoglycan biosynthesis. Its function is as follows. Cell wall formation. The protein is UDP-N-acetylenolpyruvoylglucosamine reductase of Chloroherpeton thalassium (strain ATCC 35110 / GB-78).